A 348-amino-acid polypeptide reads, in one-letter code: Growth-regulating factor 5 (348 aa).

The 36-residue stretch at 24-59 (VFTAAQWAELEQQALIYKYLVAGVPVPGDLLLPIRP) folds into the QLQ domain. 2 short sequence motifs (bipartite nuclear localization signal) span residues 94-112 (KKLDPEPWRCRRTDGKKWR) and 130-137 (RGRNRSRK). The 45-residue stretch at 97-141 (DPEPWRCRRTDGKKWRCSKEAHPDSKYCERHMHRGRNRSRKPVES) folds into the WRC domain. Disordered regions lie at residues 125-165 (ERHM…HDTD) and 306-348 (LRPF…PRCD). Residues 127–136 (HMHRGRNRSR) show a composition bias toward basic residues. Positions 148-161 (PQSQPQLSNVTTAT) are enriched in polar residues. Residues 306–320 (LRPFFDEWPGRRDSW) show a composition bias toward basic and acidic residues. Over residues 329-340 (NQTSFSTTQLSI) the composition is skewed to polar residues.

This sequence belongs to the GRF family.

The protein localises to the nucleus. Functionally, transcription activator that plays a regulatory role in gibberellin-induced stem elongation. The polypeptide is Growth-regulating factor 5 (GRF5) (Oryza sativa subsp. japonica (Rice)).